The following is a 1213-amino-acid chain: MIELNNHSKINKNENNTNTRNNSSNNNNNNNNINKTNTNKYFEYNQNSIIYSSIPNSFLSHHPNSVGSQCLSLNSFLPPKPPILLSIFNSDTIGNNNNNNYSSSSSRNNSSGCSSSNNNNNNNNNNNNNNNNNNNNNNNNCNIEQYKNNQKQPKQQQQQKDQTIATQHRISLSSSSSSSSLSSSSSSSSVKQSFQIVKRLFGSLSEYMFPQKDEILYETDPYYLYQDDTQSNDSNEFYDDTDIGSDIDEANLNNTYNIQNCNKTLYNKQQQQAHFVNMNKNVNSNNGTGNSNQSNNVNKNQQNNNNNNNNNSHNNNNGNQNSSSSSSNSGASGSGGNGNNNNNNNNNNNNNNNNNNNSNSNSNNNSKSNNNNKKEGKDGATMNGSHPLIPFRKKPAQVPSPCFRMNSPNSDNDQYLDQLALENSSKKSLVVYNTDNLDQWKHSHLNENFDILQNDLIDIQQQQQQQQQQDNTLQYSSPINKRQEQEQQHIPFQFTTEQQQQLQQQQQQQQQNKTKQHPILLQRQQQQKQKQQQQQQIQQEQIGNNNSNNNNNINNNNNINNNYNNVNDLMNKFEIDQKQHDSQQNLVEEKRTPSFHEHNIIFNSFNFICSIVLDGSNIKSTEKYKAKLIIGFCFTILSFIPSWIIFFWLSGINKPAVMAIIAMPMSISSLVILKRTGSIHYPCHILCFTLCFALTINSYYTGGHQSTIRLLMSTVPIISALVLGRKASIQWSLMVLSIYLLFFVANLYGHEYVQGIPSIIIRSHMNFIIDVTIIIMTLIFTLCYQYFIDEAHRETKLKNAQLTIAKDAAIEAYQARQEFLATMSHEIRTPLNGLIGMATLLRDSHNLPPEEKTMAKAVKSCGDILLRLVNDILDLSKLEANQMGLEHIPFRMRELTQQICHVLSGQANEKNIHLSCEVSDKIPSILLGDSGRILQILMNLTGNALKFTQSGYVKIIIDLIEEESELVSLKKGEYNISFRVKDTGIGVPVESHQKIFEAFVQADPSDSRKYGGSGLGLYLCAKLVRLMKGEIGVYNNPDCDGSTFWFILPLEEGTDQSMQQMNNGARHKAFPQDCVKVLIAEDNIINQRVAVKFLEKIGIKAEVAGNGNEVLEILERQHYDLIFMDFQMPILDGLRCSKTIREFEQNHKWNRICPSIFICGLTANTMSTDKKRCFDHGMNHFISKPFQLEQLRSAIEMAIEHKQRNLMNLNIRN.

4 disordered regions span residues 1–37 (MIELNNHSKINKNENNTNTRNNSSNNNNNNNNINKTN), 98–189 (NNNY…SSSS), 279–392 (NKNV…IPFR), and 495–565 (TTEQ…NYNN). Low complexity-rich tracts occupy residues 98-162 (NNNY…QKDQ), 171-189 (SLSSSSSSSSLSSSSSSSS), 279-331 (NKNV…NSGA), 339-371 (NNNNNNNNNNNNNNNNNNNSNSNSNNNSKSNNN), 498-511 (QQQQLQQQQQQQQQ), and 522-565 (QRQQ…NYNN). 6 helical membrane-spanning segments follow: residues 600–618 (IIFNSFNFICSIVLDGSNI), 628–648 (LIIGFCFTILSFIPSWIIFFW), 652–672 (INKPAVMAIIAMPMSISSLVI), 676–696 (TGSIHYPCHILCFTLCFALTI), 729–749 (IQWSLMVLSIYLLFFVANLYG), and 768–788 (IIDVTIIIMTLIFTLCYQYFI). One can recognise a Histidine kinase domain in the interval 822–1052 (TMSHEIRTPL…TFWFILPLEE (231 aa)). His825 is modified (phosphohistidine; by autocatalysis). A Response regulatory domain is found at 1076-1199 (KVLIAEDNII…QLRSAIEMAI (124 aa)). Asp1125 bears the 4-aspartylphosphate mark.

Activation probably requires transfer of a phosphate group between a histidine in the kinase core (transmitter) domain and an aspartate of the receiver domain.

It localises to the nucleus membrane. The enzyme catalyses ATP + protein L-histidine = ADP + protein N-phospho-L-histidine.. Functionally, involved in a signal transduction pathway that regulates morphogenesis and controls entry into the culmination stage. May act via the regA pathway, being activated by a morphogenesis-stimulated ligand, reducing phosphodiesterase regA levels and allowing cAMP level to rise to promote the culmination stage. This protein probably undergoes an ATP-dependent autophosphorylation at a conserved histidine residue in the kinase core, and a phosphoryl group is then transferred to a conserved aspartate residue in the receiver domain. This Dictyostelium discoideum (Social amoeba) protein is Hybrid signal transduction histidine kinase K (dhkK).